Here is a 444-residue protein sequence, read N- to C-terminus: Tubulin beta-4A chain (444 aa).

The MREI motif signature appears at 1-4 (MREI). Residues Gln-11, Glu-69, Ser-138, Gly-142, Thr-143, and Gly-144 each coordinate GTP. Glu-69 lines the Mg(2+) pocket. Ser-172 carries the phosphoserine; by CDK1 modification. GTP is bound by residues Asn-204 and Asn-226. Glu-436 is subject to 5-glutamyl polyglutamate.

This sequence belongs to the tubulin family. In terms of assembly, dimer of alpha and beta chains. A typical microtubule is a hollow water-filled tube with an outer diameter of 25 nm and an inner diameter of 15 nM. Alpha-beta heterodimers associate head-to-tail to form protofilaments running lengthwise along the microtubule wall with the beta-tubulin subunit facing the microtubule plus end conferring a structural polarity. Microtubules usually have 13 protofilaments but different protofilament numbers can be found in some organisms and specialized cells. Mg(2+) serves as cofactor. In terms of processing, some glutamate residues at the C-terminus are polyglycylated, resulting in polyglycine chains on the gamma-carboxyl group. Glycylation is mainly limited to tubulin incorporated into axonemes (cilia and flagella) whereas glutamylation is prevalent in neuronal cells, centrioles, axonemes, and the mitotic spindle. Both modifications can coexist on the same protein on adjacent residues, and lowering polyglycylation levels increases polyglutamylation, and reciprocally. Cilia and flagella glycylation is required for their stability and maintenance. Flagella glycylation controls sperm motility. Post-translationally, some glutamate residues at the C-terminus are polyglutamylated, resulting in polyglutamate chains on the gamma-carboxyl group. Polyglutamylation plays a key role in microtubule severing by spastin (SPAST). SPAST preferentially recognizes and acts on microtubules decorated with short polyglutamate tails: severing activity by SPAST increases as the number of glutamates per tubulin rises from one to eight, but decreases beyond this glutamylation threshold. Glutamylation is also involved in cilia motility. Phosphorylated on Ser-172 by CDK1 during the cell cycle, from metaphase to telophase, but not in interphase. This phosphorylation inhibits tubulin incorporation into microtubules.

It is found in the cytoplasm. Its subcellular location is the cytoskeleton. In terms of biological role, tubulin is the major constituent of microtubules, a cylinder consisting of laterally associated linear protofilaments composed of alpha- and beta-tubulin heterodimers. Microtubules grow by the addition of GTP-tubulin dimers to the microtubule end, where a stabilizing cap forms. Below the cap, tubulin dimers are in GDP-bound state, owing to GTPase activity of alpha-tubulin. This is Tubulin beta-4A chain (TUBB4A) from Bos taurus (Bovine).